Reading from the N-terminus, the 612-residue chain is Sulfite reductase [NADPH] flavoprotein alpha-component (612 aa).

Positions 64–202 (VTLISASQTG…QAQQWRQQVV (139 aa)) constitute a Flavodoxin-like domain. Residues 70 to 75 (SQTGNA), 117 to 120 (STQG), and 153 to 162 (LGDTSYEHFC) contribute to the FMN site. Residues 247-461 (TAPLTAQLSV…IEHNDNFRLP (215 aa)) enclose the FAD-binding FR-type domain. FAD contacts are provided by residues T335, K369, 399 to 402 (RLYS), 417 to 419 (TVG), Y423, and 432 to 435 (GGAS). NADP(+) contacts are provided by residues 532-533 (SR), 538-542 (KIYVQ), and D574. Y612 provides a ligand contact to FAD.

The protein belongs to the NADPH-dependent sulphite reductase flavoprotein subunit CysJ family. It in the N-terminal section; belongs to the flavodoxin family. In the C-terminal section; belongs to the flavoprotein pyridine nucleotide cytochrome reductase family. Alpha(8)-beta(8). The alpha component is a flavoprotein, the beta component is a hemoprotein. It depends on FAD as a cofactor. FMN serves as cofactor.

The catalysed reaction is hydrogen sulfide + 3 NADP(+) + 3 H2O = sulfite + 3 NADPH + 4 H(+). It functions in the pathway sulfur metabolism; hydrogen sulfide biosynthesis; hydrogen sulfide from sulfite (NADPH route): step 1/1. Its function is as follows. Component of the sulfite reductase complex that catalyzes the 6-electron reduction of sulfite to sulfide. This is one of several activities required for the biosynthesis of L-cysteine from sulfate. The flavoprotein component catalyzes the electron flow from NADPH -&gt; FAD -&gt; FMN to the hemoprotein component. The protein is Sulfite reductase [NADPH] flavoprotein alpha-component of Yersinia pseudotuberculosis serotype O:1b (strain IP 31758).